The chain runs to 181 residues: Inner membrane-spanning protein YciB (181 aa).

A run of 5 helical transmembrane segments spans residues 10-30 (LIIF…GALI), 50-70 (MHLI…ILHD), 72-92 (SFIK…LGVS), 118-138 (VTWY…YVAF), and 148-168 (FKVF…VLYL).

This sequence belongs to the YciB family.

The protein localises to the cell inner membrane. Plays a role in cell envelope biogenesis, maintenance of cell envelope integrity and membrane homeostasis. The sequence is that of Inner membrane-spanning protein YciB from Shewanella halifaxensis (strain HAW-EB4).